Consider the following 218-residue polypeptide: Acetoacetyl-CoA:acetate/butyrate CoA transferase alpha subunit (218 aa).

CoA is bound at residue 24 to 30 (GGFLNCG).

It belongs to the 3-oxoacid CoA-transferase subunit A family. In terms of assembly, heterotetramer composed of two alpha subunits (CtfA) and two beta subunits (CtfB).

It carries out the reaction acetoacetate + butanoyl-CoA = acetoacetyl-CoA + butanoate. The catalysed reaction is acetoacetate + acetyl-CoA = acetoacetyl-CoA + acetate. Its activity is regulated as follows. The acetate and butyrate conversion reactions are inhibited in vitro by physiological levels of acetone and butanol. Its function is as follows. Catalyzes the transfer of CoA from acetoacetyl-CoA to acetate, butyrate and propionate. Also shows low activity with valerate, isobutyrate and crotonate. Plays an important role in the metabolic shift between the acid-producing and solvent-forming states of C.acetobutylicum. Acts mainly to detoxify the medium by removing the acetate and butyrate excreted earlier in the fermentation. The chain is Acetoacetyl-CoA:acetate/butyrate CoA transferase alpha subunit from Clostridium acetobutylicum (strain ATCC 824 / DSM 792 / JCM 1419 / IAM 19013 / LMG 5710 / NBRC 13948 / NRRL B-527 / VKM B-1787 / 2291 / W).